The following is a 159-amino-acid chain: Protein B1 (159 aa).

Residues 1–15 (MQKNMKTKKTKKRGR) show a composition bias toward basic residues. Disordered stretches follow at residues 1–100 (MQKN…RTRE) and 133–159 (PGHG…DPPR). Basic and acidic residues predominate over residues 16–31 (KEGNTPETERRMEPAR). Residues 85–96 (RGRHIHTRGART) are compositionally biased toward basic residues.

The chain is Protein B1 (B1) from Human herpesvirus 6B (strain Z29) (HHV-6 variant B).